The primary structure comprises 170 residues: Adenine phosphoribosyltransferase (170 aa).

It belongs to the purine/pyrimidine phosphoribosyltransferase family. Homodimer.

Its subcellular location is the cytoplasm. The enzyme catalyses AMP + diphosphate = 5-phospho-alpha-D-ribose 1-diphosphate + adenine. Its pathway is purine metabolism; AMP biosynthesis via salvage pathway; AMP from adenine: step 1/1. Functionally, catalyzes a salvage reaction resulting in the formation of AMP, that is energically less costly than de novo synthesis. This chain is Adenine phosphoribosyltransferase, found in Bacillus velezensis (strain DSM 23117 / BGSC 10A6 / LMG 26770 / FZB42) (Bacillus amyloliquefaciens subsp. plantarum).